Here is a 346-residue protein sequence, read N- to C-terminus: Phosphoribosylformylglycinamidine cyclo-ligase (346 aa).

Belongs to the AIR synthase family.

It localises to the cytoplasm. It catalyses the reaction 2-formamido-N(1)-(5-O-phospho-beta-D-ribosyl)acetamidine + ATP = 5-amino-1-(5-phospho-beta-D-ribosyl)imidazole + ADP + phosphate + H(+). It functions in the pathway purine metabolism; IMP biosynthesis via de novo pathway; 5-amino-1-(5-phospho-D-ribosyl)imidazole from N(2)-formyl-N(1)-(5-phospho-D-ribosyl)glycinamide: step 2/2. The polypeptide is Phosphoribosylformylglycinamidine cyclo-ligase (Methylobacillus flagellatus (strain ATCC 51484 / DSM 6875 / VKM B-1610 / KT)).